A 130-amino-acid chain; its full sequence is Large ribosomal subunit protein bL19 (130 aa).

This sequence belongs to the bacterial ribosomal protein bL19 family.

This protein is located at the 30S-50S ribosomal subunit interface and may play a role in the structure and function of the aminoacyl-tRNA binding site. In Burkholderia vietnamiensis (strain G4 / LMG 22486) (Burkholderia cepacia (strain R1808)), this protein is Large ribosomal subunit protein bL19.